Consider the following 264-residue polypeptide: NAD kinase (264 aa).

Catalysis depends on aspartate 45, which acts as the Proton acceptor. Residues aspartate 45–glycine 46, asparagine 121–glutamate 122, arginine 147, aspartate 149, alanine 184, and glutamine 221 each bind NAD(+).

It belongs to the NAD kinase family. Requires a divalent metal cation as cofactor.

It localises to the cytoplasm. It carries out the reaction NAD(+) + ATP = ADP + NADP(+) + H(+). Its function is as follows. Involved in the regulation of the intracellular balance of NAD and NADP, and is a key enzyme in the biosynthesis of NADP. Catalyzes specifically the phosphorylation on 2'-hydroxyl of the adenosine moiety of NAD to yield NADP. In Leuconostoc mesenteroides subsp. mesenteroides (strain ATCC 8293 / DSM 20343 / BCRC 11652 / CCM 1803 / JCM 6124 / NCDO 523 / NBRC 100496 / NCIMB 8023 / NCTC 12954 / NRRL B-1118 / 37Y), this protein is NAD kinase.